The following is a 680-amino-acid chain: Probable potassium transport system protein Kup (680 aa).

The next 12 membrane-spanning stretches (helical) occupy residues 16–36 (IAGM…SPLY), 60–80 (ISLV…LIAL), 103–123 (WLVI…MLTP), 150–170 (EVII…KFGT), 177–197 (FGPI…MNLM), 222–242 (VGIL…ALYS), 255–275 (SWPY…VWLL), 302–322 (IPAI…LISG), 351–371 (LYIS…VFYF), 380–400 (AYGL…FHYL), 407–427 (WFLA…FFIA), and 432–452 (FMHG…IMFV).

It belongs to the HAK/KUP transporter (TC 2.A.72) family.

The protein resides in the cell membrane. It catalyses the reaction K(+)(in) + H(+)(in) = K(+)(out) + H(+)(out). Transport of potassium into the cell. Likely operates as a K(+):H(+) symporter. The sequence is that of Probable potassium transport system protein Kup from Latilactobacillus sakei subsp. sakei (strain 23K) (Lactobacillus sakei subsp. sakei).